Here is a 1890-residue protein sequence, read N- to C-terminus: Proteasome-associated protein ECM29 homolog (1890 aa).

18 HEAT repeats span residues 6-29, 30-67, 130-167, 226-263, 294-330, 334-354, 355-395, 459-496, 498-523, 524-561, 565-602, 685-722, 776-813, 843-882, 938-975, 980-1018, 1118-1155, and 1159-1196; these read NAEI…EKLE, AAVG…RLSS, DKLF…ICAN, FSDL…MLDF, RVRQ…TNTN, KVLA…ELVS, KVSK…SFPQ, GQQH…EYYA, ARYL…LYGT, SKKD…EQRR, PSFQ…SLEV, AKQL…FGLS, PQFV…AVEI, STKL…GDGE, DDFD…HCSQ, LAKK…ISDS, PYLG…DSKE, and RYYW…RPNG. The residue at position 1213 (Ser1213) is a Phosphoserine. HEAT repeat units follow at residues 1271–1309, 1313–1350, 1378–1415, 1416–1457, 1497–1534, 1541–1578, 1583–1620, and 1623–1660; these read AVAS…SSGS, PHLA…AQEA, SVLE…IRLG, KEMT…LAKE, DYMD…DVSP, LNLN…RLSS, PDRL…GLDR, and QICS…QLEA. A disordered region spans residues 1680-1702; that stretch reads RKESDDEDEPNTSQELSADERNK. Phosphoserine is present on Ser1683. Position 1691 is a phosphothreonine (Thr1691). Residue Ser1692 is modified to Phosphoserine. HEAT repeat units lie at residues 1751–1788 and 1826–1863; these read PVQV…EKKI and KEAL…NLEK.

In terms of assembly, associated with the proteasome.

The protein localises to the cytoplasm. The chain is Proteasome-associated protein ECM29 homolog from Drosophila melanogaster (Fruit fly).